The chain runs to 803 residues: Volume-regulated anion channel subunit LRRC8C (803 aa).

The Cytoplasmic segment spans residues 1–22 (MIPVTEFRQFSEQQPAFRVLKP). Residues 23–47 (WWDVFTDYLSVAMLMIGVFGCTLQV) form a helical membrane-spanning segment. The Extracellular portion of the chain corresponds to 48 to 124 (MQDKIICLPK…CYERALHWYA (77 aa)). Intrachain disulfides connect Cys-54-Cys-308 and Cys-115-Cys-293. 2 N-linked (GlcNAc...) asparagine glycosylation sites follow: Asn-64 and Asn-70. The chain crosses the membrane as a helical span at residues 125 to 144 (KYFPYLVLIHTLVFMLCSNF). At 145–262 (WFKFPGSSSK…EEGDILYAMY (118 aa)) the chain is on the cytoplasmic side. Positions 177 to 209 (EVSGEDSEEKDNRKNNMNRSNTIQSGPEDSLVN) are disordered. Over residues 191–209 (NNMNRSNTIQSGPEDSLVN) the composition is skewed to polar residues. Phosphoserine occurs at positions 212 and 215. Residues 263–284 (VRQTVLKVIKFLIIIAYNSALV) form a helical membrane-spanning segment. Over 285-314 (SKVQFTVDCNVDIQDMTGYKNFSCNHTMAH) the chain is Extracellular. The chain crosses the membrane as a helical span at residues 315-339 (LFSKLSFCYLCFVSIYGLTCLYTLY). The Cytoplasmic segment spans residues 340–803 (WLFYRSLREY…SDVREQMKTE (464 aa)). LRR repeat units follow at residues 397-420 (ENKL…KLQT), 421-443 (NAHN…VFEI), 446-466 (LQSL…IAQL), 467-488 (DNLQ…ALSF), 490-513 (KENL…MYGL), 515-537 (NLEE…TLES), 541-563 (LKSL…VVDV), 565-587 (SHLQ…NLKK), 588-611 (MTNL…VFSL), 613-635 (SLQE…SFQH), 636-659 (LRKL…IKKL), 660-682 (TSLE…LFLC), 684-705 (KIRY…IGVL), 706-728 (QSLQ…LYFC), 730-751 (KLKT…IGNL), 753-774 (FLSY…LGDC), and 776-799 (ALKR…VREQ).

The protein belongs to the LRRC8 family. As to quaternary structure, heterohexamer; oligomerizes with other LRRC8 proteins (LRRC8A, LRRC8B, LRRC8D and/or LRRC8E) to form a heterohexamer. Homoheptamer; inactive, likely because it is not targeted to the plasma membrane in the absence of LRRC8A. In vivo, the subunit composition may depend primarily on expression levels, and heterooligomeric channels containing various proportions of the different LRRC8 proteins may coexist. Expressed at highest levels in skeletal muscle, and at moderate levels in heart, lung and peripheral blood leukocytes.

It localises to the cell membrane. Its subcellular location is the endoplasmic reticulum membrane. It carries out the reaction chloride(in) = chloride(out). It catalyses the reaction iodide(out) = iodide(in). The catalysed reaction is taurine(out) = taurine(in). The enzyme catalyses 2',3'-cGAMP(out) = 2',3'-cGAMP(in). Functionally, non-essential component of the volume-regulated anion channel (VRAC, also named VSOAC channel), an anion channel required to maintain a constant cell volume in response to extracellular or intracellular osmotic changes. The VRAC channel conducts iodide better than chloride and can also conduct organic osmolytes like taurine. Plays a redundant role in the efflux of amino acids, such as aspartate and glutamate, in response to osmotic stress. The VRAC channel also mediates transport of immunoreactive cyclic dinucleotide GMP-AMP (2'-3'-cGAMP), an immune messenger produced in response to DNA virus in the cytosol. Channel activity requires LRRC8A plus at least one other family member (LRRC8B, LRRC8C, LRRC8D or LRRC8E); channel characteristics depend on the precise subunit composition. The chain is Volume-regulated anion channel subunit LRRC8C from Homo sapiens (Human).